A 215-amino-acid chain; its full sequence is Oligoribonuclease (215 aa).

Residues 5-170 form the Exonuclease domain; it reads LVWIDCEMTG…ADIHESIREL (166 aa). Tyrosine 127 is an active-site residue.

Belongs to the oligoribonuclease family.

Its subcellular location is the cytoplasm. In terms of biological role, 3'-to-5' exoribonuclease specific for small oligoribonucleotides. This is Oligoribonuclease from Mycobacterium leprae (strain TN).